The primary structure comprises 1066 residues: MGFELDRFDGDVDPDLKCALCHKVLEDPLTTPCGHVFCAGCVLPWVVQEGSCPARCRGRLSAKELNHVLPLKRLILKLDIKCAYATRGCGRVVKLQQLPEHLERCDFAPARCRHAGCGQVLLRRDVEAHMRDACDARPVGRCQEGCGLPLTHGEQRAGGHCCARALRAHNGALQARLGALHKALKKEALRAGKREKSLVAQLAAAQLELQMTALRYQKKFTEYSARLDSLSRCVAAPPGGKGEETKSLTLVLHRDSGSLGFNIIGGRPSVDNHDGSSSEGIFVSKIVDSGPAAKEGGLQIHDRIIEVNGRDLSRATHDQAVEAFKTAKEPIVVQVLRRTPRTKMFTPPSESQLVDTGTQTDITFEHIMALTKMSSPSPPVLDPYLLPEEHPSAHEYYDPNDYIGDIHQEMDREELELEEVDLYRMNSQDKLGLTVCYRTDDEDDIGIYISEIDPNSIAAKDGRIREGDRIIQINGIEVQNREEAVALLTSEENKNFSLLIARPELQLDEGWMDDDRNDFLDDLHMDMLEEQHHQAMQFTASVLQQKKHDEDGGTTDTATILSNQHEKDSGVGRTDESTRNDESSEQENNGDDATASSNPLAGQRKLTCSQDTLGSGDLPFSNESFISADCTDADYLGIPVDECERFRELLELKCQVKSATPYGLYYPSGPLDAGKSDPESVDKELELLNEELRSIELECLSIVRAHKMQQLKEQYRESWMLHNSGFRNYNTSIDVRRHELSDITELPEKSDKDSSSAYNTGESCRSTPLTLEISPDNSLRRAAEGISCPSSEGAVGTTEAYGPASKNLLSITEDPEVGTPTYSPSLKELDPNQPLESKERRASDGSRSPTPSQKLGSAYLPSYHHSPYKHAHIPAHAQHYQSYMQLIQQKSAVEYAQSQMSLVSMCKDLSSPTPSEPRMEWKVKIRSDGTRYITKRPVRDRLLRERALKIREERSGMTTDDDAVSEMKMGRYWSKEERKQHLVKAKEQRRRREFMMQSRLDCLKEQQAADDRKEMNILELSHKKMMKKRNKKIFDNWMTIQELLTHGTKSPDGTRVYNSFLSVTTV.

The RING-type; degenerate zinc-finger motif lies at Cys18–Cys56. The TRAF-type zinc finger occupies Glu100–Gly158. PDZ domains follow at residues Thr249 to Thr339 and Glu419 to Pro503. Ser427 bears the Phosphoserine mark. Positions Gln545 to Gln603 are disordered. A compositionally biased stretch (polar residues) spans Thr554–Asn563. Basic and acidic residues predominate over residues Gln564–Glu582. The span at Thr594–Gln603 shows a compositional bias: polar residues. Residues Glu679 to Arg704 are a coiled coil. The segment covering Thr744 to Ser754 has biased composition (basic and acidic residues). Disordered regions lie at residues Thr744–Ser778 and Leu808–Tyr863. 2 stretches are compositionally biased toward polar residues: residues Ser755–Leu769 and Gly845–Leu855. Positions Lys975–Met1025 form a coiled coil.

As to quaternary structure, interacts with NLGN1 and EFNB2. Interacts with UBE2D2 and with MUSK via the first PDZ domain. Auto-ubiquitinated. As to expression, widely expressed, including in the heart, skeletal muscle and liver and, at lower levels, in the brain, colon, small intestine, placenta and lung. Down-regulated in ovarian serous papillary tumors.

The protein localises to the synapse. It is found in the cytoplasm. It carries out the reaction S-ubiquitinyl-[E2 ubiquitin-conjugating enzyme]-L-cysteine + [acceptor protein]-L-lysine = [E2 ubiquitin-conjugating enzyme]-L-cysteine + N(6)-ubiquitinyl-[acceptor protein]-L-lysine.. It functions in the pathway protein modification; protein ubiquitination. Functionally, E3 ubiquitin-protein ligase. Plays an important role in regulating the surface level of MUSK on myotubes. Mediates the ubiquitination of MUSK, promoting its endocytosis and lysosomal degradation. Might contribute to terminal myogenic differentiation. This chain is E3 ubiquitin-protein ligase PDZRN3 (PDZRN3), found in Homo sapiens (Human).